The chain runs to 290 residues: Arylamine N-acetyltransferase 1 (290 aa).

At Met-1 the chain carries N-acetylmethionine. The Acyl-thioester intermediate role is filled by Cys-68. Residue Ser-103 coordinates CoA. 106-107 (IH) contacts substrate. Active-site residues include His-107 and Asp-122. Residues Tyr-208 and Ser-287 each contribute to the CoA site.

Belongs to the arylamine N-acetyltransferase family.

Its subcellular location is the cytoplasm. It carries out the reaction an arylamine + acetyl-CoA = an N-acetylarylamine + CoA. Functionally, participates in the detoxification of a plethora of hydrazine and arylamine drugs. This chain is Arylamine N-acetyltransferase 1 (NAT1), found in Mesocricetus auratus (Golden hamster).